We begin with the raw amino-acid sequence, 246 residues long: Endonuclease V (246 aa).

Mg(2+)-binding residues include Asp50 and Asp120.

The protein belongs to the endonuclease V family. Mg(2+) is required as a cofactor.

The protein resides in the cytoplasm. It carries out the reaction Endonucleolytic cleavage at apurinic or apyrimidinic sites to products with a 5'-phosphate.. Its function is as follows. DNA repair enzyme involved in the repair of deaminated bases. Selectively cleaves double-stranded DNA at the second phosphodiester bond 3' to a deoxyinosine leaving behind the intact lesion on the nicked DNA. The polypeptide is Endonuclease V (Gloeobacter violaceus (strain ATCC 29082 / PCC 7421)).